Reading from the N-terminus, the 208-residue chain is Peptide deformylase 3 (208 aa).

Fe cation is bound by residues cysteine 120 and histidine 162. Residue glutamate 163 is part of the active site. Histidine 166 is a Fe cation binding site.

It belongs to the polypeptide deformylase family. Fe(2+) is required as a cofactor.

The catalysed reaction is N-terminal N-formyl-L-methionyl-[peptide] + H2O = N-terminal L-methionyl-[peptide] + formate. In terms of biological role, removes the formyl group from the N-terminal Met of newly synthesized proteins. Requires at least a dipeptide for an efficient rate of reaction. N-terminal L-methionine is a prerequisite for activity but the enzyme has broad specificity at other positions. The protein is Peptide deformylase 3 of Streptomyces coelicolor (strain ATCC BAA-471 / A3(2) / M145).